The sequence spans 424 residues: GTPase Obg (424 aa).

The Obg domain occupies 1 to 158 (MFYDQAKIYV…RNLLLELKLL (158 aa)). The OBG-type G domain maps to 159–329 (ADVGLVGFPN…LVYAAAKALP (171 aa)). GTP is bound by residues 165 to 172 (GFPNVGKS), 190 to 194 (FTTLV), 212 to 215 (DIPG), 282 to 285 (NKMD), and 310 to 312 (SAA). Residues Ser-172 and Thr-192 each coordinate Mg(2+). The OCT domain maps to 347–424 (TQASAPHRFE…IAGIEFEWEE (78 aa)).

The protein belongs to the TRAFAC class OBG-HflX-like GTPase superfamily. OBG GTPase family. Monomer. Mg(2+) is required as a cofactor.

It localises to the cytoplasm. In terms of biological role, an essential GTPase which binds GTP, GDP and possibly (p)ppGpp with moderate affinity, with high nucleotide exchange rates and a fairly low GTP hydrolysis rate. Plays a role in control of the cell cycle, stress response, ribosome biogenesis and in those bacteria that undergo differentiation, in morphogenesis control. In Desulfitobacterium hafniense (strain DSM 10664 / DCB-2), this protein is GTPase Obg.